The primary structure comprises 372 residues: MVMKSGRYIGVMSGTSLDGVDVVLAAINDKVVAQQASYSHPFPYELKQKILAVCQGQQTTLSAIGRLDYELGSLFAEAVQGLLIKTGLTASDITAVGCHGQTVWHEPNSHTPFTMQLGDNNRIAALTGITVVGDFRRRDMAYGGQGAPLVPAFHFAVLGHLTERRIILNIGGIANITTLLPGSPVKGYDTGPGNMLMDSWVWRHQKKPYDKDAQWAREGVVNNKLLGQMLSDHYFSRPAPKSTGREYFNMSWLEAQLVNFPDIPPVDVQATLAELTAASVSQQIMLSGGCERLLVCGGGAHNPQIMSRLSALLPGTEVCPTDKYGLSGDDMEALAFAWLAFRTMSGAPGNLPSVTGASTETILGAIYPVINQ.

14–21 (GTSLDGVD) is a binding site for ATP.

This sequence belongs to the anhydro-N-acetylmuramic acid kinase family.

The enzyme catalyses 1,6-anhydro-N-acetyl-beta-muramate + ATP + H2O = N-acetyl-D-muramate 6-phosphate + ADP + H(+). The protein operates within amino-sugar metabolism; 1,6-anhydro-N-acetylmuramate degradation. It participates in cell wall biogenesis; peptidoglycan recycling. Its function is as follows. Catalyzes the specific phosphorylation of 1,6-anhydro-N-acetylmuramic acid (anhMurNAc) with the simultaneous cleavage of the 1,6-anhydro ring, generating MurNAc-6-P. Is required for the utilization of anhMurNAc either imported from the medium or derived from its own cell wall murein, and thus plays a role in cell wall recycling. In Photorhabdus laumondii subsp. laumondii (strain DSM 15139 / CIP 105565 / TT01) (Photorhabdus luminescens subsp. laumondii), this protein is Anhydro-N-acetylmuramic acid kinase.